Consider the following 696-residue polypeptide: Polyribonucleotide nucleotidyltransferase (696 aa).

Mg(2+)-binding residues include Asp486 and Asp492. The region spanning 553-612 (PRITQKQIPKDRIGELIGPGGKMIRAIIEQSGSEISVDDSGKVTIASPSEESKEKAIAMI) is the KH domain. The region spanning 622–690 (GKIYDGVIKR…KMGKIDLSRK (69 aa)) is the S1 motif domain.

It belongs to the polyribonucleotide nucleotidyltransferase family. Mg(2+) serves as cofactor.

It is found in the cytoplasm. It carries out the reaction RNA(n+1) + phosphate = RNA(n) + a ribonucleoside 5'-diphosphate. Involved in mRNA degradation. Catalyzes the phosphorolysis of single-stranded polyribonucleotides processively in the 3'- to 5'-direction. This is Polyribonucleotide nucleotidyltransferase from Leptospira biflexa serovar Patoc (strain Patoc 1 / ATCC 23582 / Paris).